A 551-amino-acid polypeptide reads, in one-letter code: Hydroxymethylpyrimidine/phosphomethylpyrimidine kinase THI20 (551 aa).

Gln64 contacts 4-amino-5-hydroxymethyl-2-methylpyrimidine. Residue Cys468 is the Nucleophile of the active site. Glu540 (proton donor) is an active-site residue.

In the N-terminal section; belongs to the ThiD family. This sequence in the C-terminal section; belongs to the thiaminase-2 family.

The enzyme catalyses 4-amino-5-hydroxymethyl-2-methylpyrimidine + ATP = 4-amino-2-methyl-5-(phosphooxymethyl)pyrimidine + ADP + H(+). It carries out the reaction 4-amino-2-methyl-5-(phosphooxymethyl)pyrimidine + ATP = 4-amino-2-methyl-5-(diphosphooxymethyl)pyrimidine + ADP. The catalysed reaction is thiamine + H2O = 5-(2-hydroxyethyl)-4-methylthiazole + 4-amino-5-hydroxymethyl-2-methylpyrimidine + H(+). Its pathway is cofactor biosynthesis; thiamine diphosphate biosynthesis; 4-amino-2-methyl-5-diphosphomethylpyrimidine from 5-amino-1-(5-phospho-D-ribosyl)imidazole: step 2/3. The protein operates within cofactor biosynthesis; thiamine diphosphate biosynthesis; 4-amino-2-methyl-5-diphosphomethylpyrimidine from 5-amino-1-(5-phospho-D-ribosyl)imidazole: step 3/3. Trifunctional protein with both thiamine biosynthetic and degradative activity. Within the thiamine biosynthesis pathway, catalyzes the phosphorylation of hydroxymethylpyrimidine (HMP) to hydroxymethylpyrimidine phosphate (HMP-P), as well as of HMP-P to HMP-PP. Also has thiaminase II activity and degrades thiamine using water as the nucleophile, resulting only in the formation of HMP (4-amino-2-methyl-5-hydroxymethylpyrimidine) and Thz (4-methyl-5-thiazole ethanol). In Saccharomyces cerevisiae (strain ATCC 204508 / S288c) (Baker's yeast), this protein is Hydroxymethylpyrimidine/phosphomethylpyrimidine kinase THI20.